A 1347-amino-acid polypeptide reads, in one-letter code: Spermatogenesis-associated protein 31A5 (1347 aa).

A helical transmembrane segment spans residues proline 23–leucine 43. 7 disordered regions span residues proline 55–cysteine 87, glycine 106–threonine 233, glutamate 373–lysine 397, aspartate 628–glutamine 657, arginine 900–valine 955, valine 1084–serine 1161, and lysine 1313–histidine 1335. Positions glycine 60–arginine 82 are enriched in basic residues. Residues leucine 165–valine 178 are compositionally biased toward polar residues. Over residues proline 198–proline 211 the composition is skewed to pro residues. 2 stretches are compositionally biased toward polar residues: residues proline 631–glutamate 651 and leucine 927–alanine 948. Basic and acidic residues-rich tracts occupy residues histidine 1108 to glycine 1127 and arginine 1137 to glutamate 1146.

It belongs to the SPATA31 family.

Its subcellular location is the membrane. May play a role in spermatogenesis. This chain is Spermatogenesis-associated protein 31A5 (SPATA31A5), found in Homo sapiens (Human).